The sequence spans 245 residues: MNVTLLIPARYGSSRFPGKPLAPINGKPMIQHVYERASLAKGLTAIYVATDDDRIKDAVEGFGGKVVMTSPDAASGTDRIEDAITQLGLKDDDLVVNLQGDQPLIDPISIEQIISLFERHPGEFGMATLGFEITEKCELDDPKHVKMVFDNEFNALYFSRARIPFGRDTNDYPVYKHLGVYAYTRSFISTFAKLPLGRLEDLEKLEQLRALEHGYKIKVAISAFDSPEVDTPEDIRVCESRLAVD.

Belongs to the KdsB family.

Its subcellular location is the cytoplasm. It carries out the reaction 8-amino-3,8-dideoxy-alpha-D-manno-octulosonate + CTP = CMP-8-amino-3,8-dideoxy-alpha-D-manno-oct-2-ulosonate + diphosphate. The protein operates within bacterial outer membrane biogenesis; lipopolysaccharide biosynthesis. Activates KDO8N (a required 8-carbon sugar) for incorporation into bacterial lipopolysaccharide in the Shewanella genus. The sequence is that of 8-amino-3,8-dideoxy-manno-octulosonate cytidylyltransferase from Shewanella sediminis (strain HAW-EB3).